The primary structure comprises 265 residues: uncharacterized protein (265 aa).

The N-terminal stretch at 1-20 (MSRAMALFFVLCWIQDEIVL) is a signal peptide. The chain crosses the membrane as a helical span at residues 192–212 (IIAAVSGVAILMAIVLLLLGL).

It is found in the membrane. This is an uncharacterized protein from Homo sapiens (Human).